A 91-amino-acid chain; its full sequence is RNA-binding protein Hfq (91 aa).

One can recognise a Sm domain in the interval 9-68 (DPYLNALRRERIPVSIYLVNGIKLQGQIESFDQFVILLKNTVNQMVYKHAISTVVPARSV). The disordered stretch occupies residues 68–91 (VSHHNNNHHTTPTEAVENVETQAE).

Belongs to the Hfq family. Homohexamer.

RNA chaperone that binds small regulatory RNA (sRNAs) and mRNAs to facilitate mRNA translational regulation in response to envelope stress, environmental stress and changes in metabolite concentrations. Also binds with high specificity to tRNAs. The chain is RNA-binding protein Hfq from Haemophilus influenzae (strain 86-028NP).